The chain runs to 63 residues: Putative conjugal transfer lipoprotein XF_a0011.1 (63 aa).

An N-terminal signal peptide occupies residues methionine 1–glycine 15. Cysteine 16 carries N-palmitoyl cysteine lipidation. Cysteine 16 carries the S-diacylglycerol cysteine lipid modification.

This sequence to B.suis ORF12 in VirB region.

The protein localises to the cell inner membrane. The protein is Putative conjugal transfer lipoprotein XF_a0011.1 of Xylella fastidiosa (strain 9a5c).